The primary structure comprises 179 residues: Large ribosomal subunit protein uL5 (179 aa).

Belongs to the universal ribosomal protein uL5 family. In terms of assembly, part of the 50S ribosomal subunit; part of the 5S rRNA/L5/L18/L25 subcomplex. Contacts the 5S rRNA and the P site tRNA. Forms a bridge to the 30S subunit in the 70S ribosome.

Its function is as follows. This is one of the proteins that bind and probably mediate the attachment of the 5S RNA into the large ribosomal subunit, where it forms part of the central protuberance. In the 70S ribosome it contacts protein S13 of the 30S subunit (bridge B1b), connecting the 2 subunits; this bridge is implicated in subunit movement. Contacts the P site tRNA; the 5S rRNA and some of its associated proteins might help stabilize positioning of ribosome-bound tRNAs. This Synechococcus sp. (strain CC9311) protein is Large ribosomal subunit protein uL5.